The following is a 443-amino-acid chain: tRNA modification GTPase MnmE (443 aa).

The (6S)-5-formyl-5,6,7,8-tetrahydrofolate site is built by arginine 23, glutamate 81, and lysine 119. The TrmE-type G domain maps to 214-369 (GMRVAILGKP…LLSALKERAI (156 aa)). GTP-binding positions include 224-229 (NVGKST), 243-249 (SEYPGTT), and 268-271 (DTAG). Residues serine 228 and threonine 249 each contribute to the Mg(2+) site. Lysine 443 is a (6S)-5-formyl-5,6,7,8-tetrahydrofolate binding site.

The protein belongs to the TRAFAC class TrmE-Era-EngA-EngB-Septin-like GTPase superfamily. TrmE GTPase family. As to quaternary structure, homodimer. Heterotetramer of two MnmE and two MnmG subunits. Requires K(+) as cofactor.

It is found in the cytoplasm. Functionally, exhibits a very high intrinsic GTPase hydrolysis rate. Involved in the addition of a carboxymethylaminomethyl (cmnm) group at the wobble position (U34) of certain tRNAs, forming tRNA-cmnm(5)s(2)U34. This Anaplasma marginale (strain St. Maries) protein is tRNA modification GTPase MnmE.